The sequence spans 288 residues: Energy-coupling factor transporter ATP-binding protein EcfA2 (288 aa).

Residues 3 to 245 (IEFKNVDYIY…PDWLKKHFLD (243 aa)) form the ABC transporter domain. 40–47 (GHTGSGKS) provides a ligand contact to ATP.

It belongs to the ABC transporter superfamily. Energy-coupling factor EcfA family. Forms a stable energy-coupling factor (ECF) transporter complex composed of 2 membrane-embedded substrate-binding proteins (S component), 2 ATP-binding proteins (A component) and 2 transmembrane proteins (T component).

It localises to the cell membrane. Functionally, ATP-binding (A) component of a common energy-coupling factor (ECF) ABC-transporter complex. Unlike classic ABC transporters this ECF transporter provides the energy necessary to transport a number of different substrates. This is Energy-coupling factor transporter ATP-binding protein EcfA2 from Lactobacillus gasseri (strain ATCC 33323 / DSM 20243 / BCRC 14619 / CIP 102991 / JCM 1131 / KCTC 3163 / NCIMB 11718 / NCTC 13722 / AM63).